We begin with the raw amino-acid sequence, 51 residues long: uncharacterized protein (51 aa).

It to E.coli YdfA.

This is an uncharacterized protein from Escherichia coli O157:H7.